A 38-amino-acid chain; its full sequence is Potassium channel toxin alpha-KTx 2.21 (38 aa).

Intrachain disulfides connect Cys-7–Cys-29, Cys-13–Cys-34, and Cys-17–Cys-36.

Expressed by the venom gland.

The protein localises to the secreted. Inhibits human voltage-gated potassium (Kv) channels Kv1.2/KCNA2 and Kv1.3/KCNA3. Does not block human Kv1.1/KCNA1 at 100nM concentration. The sequence is that of Potassium channel toxin alpha-KTx 2.21 from Centruroides bonito (Scorpion).